Here is a 420-residue protein sequence, read N- to C-terminus: Tyrosine--tRNA ligase (420 aa).

An L-tyrosine-binding site is contributed by Y33. The 'HIGH' region motif lies at 38-47 (PTGPSLHAGH). Positions 167 and 171 each coordinate L-tyrosine. Residues 227-231 (KFGKS) carry the 'KMSKS' region motif. K230 lines the ATP pocket. Residues 352-418 (RTIIDLLVAS…GKKNFAGVQI (67 aa)) form the S4 RNA-binding domain.

Belongs to the class-I aminoacyl-tRNA synthetase family. TyrS type 1 subfamily. As to quaternary structure, homodimer.

The protein localises to the cytoplasm. The enzyme catalyses tRNA(Tyr) + L-tyrosine + ATP = L-tyrosyl-tRNA(Tyr) + AMP + diphosphate + H(+). Functionally, catalyzes the attachment of tyrosine to tRNA(Tyr) in a two-step reaction: tyrosine is first activated by ATP to form Tyr-AMP and then transferred to the acceptor end of tRNA(Tyr). This chain is Tyrosine--tRNA ligase, found in Corynebacterium glutamicum (strain ATCC 13032 / DSM 20300 / JCM 1318 / BCRC 11384 / CCUG 27702 / LMG 3730 / NBRC 12168 / NCIMB 10025 / NRRL B-2784 / 534).